Reading from the N-terminus, the 212-residue chain is Ribonuclease P protein component 3 (212 aa).

This sequence belongs to the eukaryotic/archaeal RNase P protein component 3 family. As to quaternary structure, consists of a catalytic RNA component and at least 5 protein subunits. Forms a heterotetrameric subcomplex with Rnp2. Reconstituted enzyme missing individual protein subunits is suboptimally active, showing each subunit contributes to optimization of activity.

It localises to the cytoplasm. It catalyses the reaction Endonucleolytic cleavage of RNA, removing 5'-extranucleotides from tRNA precursor.. Part of ribonuclease P, a protein complex that generates mature tRNA molecules by cleaving their 5'-ends. Not absolutely essential for activity in vitro, however it strongly stimulates activity. Binds RNase P RNA. The polypeptide is Ribonuclease P protein component 3 (Pyrococcus horikoshii (strain ATCC 700860 / DSM 12428 / JCM 9974 / NBRC 100139 / OT-3)).